The sequence spans 175 residues: Gamma-crystallin B (175 aa).

Beta/gamma crystallin 'Greek key' domains lie at Gly-2–Ser-40 and Gly-41–Pro-83. An N-linked (Glc) (glycation) lysine; in vitro glycan is attached at Lys-3. The cysteines at positions 19 and 23 are disulfide-linked. Positions Gln-84 to Thr-88 are connecting peptide. Beta/gamma crystallin 'Greek key' domains are found at residues Phe-89–Glu-129 and Gly-130–Met-172.

The protein belongs to the beta/gamma-crystallin family.

In terms of biological role, crystallins are the dominant structural components of the vertebrate eye lens. This Bos taurus (Bovine) protein is Gamma-crystallin B (CRYGB).